The following is a 778-amino-acid chain: MARTDDQAKSVDTRYNARVESLRDKEYPMLNGSIYLDHAGTTPYPKSLMDRFAKEMTSNLFGNPHSASASSQLSTARIEDIRLRVLRFFNADPAEFDLVFVANATAGIKLVADALRTAPDGFDYSYHQASHTSLIGVREEARNSLCLDDQEVDDWLGGGCPFENDSEDRPVLFAYPAQSNMDGRRYPLNWAEKVCRGGTRKTYTLLDAAALVCSSPLDLSQANAAPDFTVLSFYKIFGFPDLGALIVRRDAEEAFDTRRYFGGGTVDMVVCLKEQWHAPKAQFLHERLEDGTLPVHSIIALDAALDVHKQLFGSMRDVASHTAFLSAMLYTRLELLRHGNGQSVCVLYSPGPETANNGLSSGPVVSFNIRNSQGAWISLAEVEKLATLKGFHIRTGGVCNPGGIASALGLEPWEMRRNFSSGFRCGTDLDIMAGKPTGVIRASLGAMSTISDVDSFVEFIAEFYRDASLSPARTEPVPQPHDPSRLRIHSMSIYPIKSCCGFQVPSGTDWEVRPEGLAWDREWCLVHQGTGQALSQKRHSKMALIRPALDFERGQLRVSYAGELPAHQPREISIPLSKNPSLFRSSSSRSRSSRVCGEEIQAQTYSSTAINSFFSDVLGVPCLLARFPAGGHGKSMRHSKAHLQKHQLSLLPTARPALPGSFPPSPPDSDTEKTVSRRILLSNESPILAITLPSVTELNREIHLSKPGLKEVSPAVFRANIVMTPADPDVPLAPYAEDSWSGIKVGPQQHEFEMLGACRRCHMVCINQETAERARSRL.

K235 is modified (N6-(pyridoxal phosphate)lysine). Residue C399 is part of the active site. Disordered regions lie at residues 576-596 (LSKN…SRVC) and 654-673 (ARPA…DTEK). Residues 584–594 (RSSSSRSRSSR) show a composition bias toward low complexity. The MOSC domain maps to 651 to 778 (LPTARPALPG…ETAERARSRL (128 aa)).

This sequence belongs to the class-V pyridoxal-phosphate-dependent aminotransferase family. MOCOS subfamily. Pyridoxal 5'-phosphate is required as a cofactor.

The enzyme catalyses Mo-molybdopterin + L-cysteine + AH2 = thio-Mo-molybdopterin + L-alanine + A + H2O. It participates in cofactor biosynthesis; molybdopterin biosynthesis. Functionally, sulfurates the molybdenum cofactor. Sulfation of molybdenum is essential for xanthine dehydrogenase (XDH) and aldehyde oxidase (ADO) enzymes in which molybdenum cofactor is liganded by 1 oxygen and 1 sulfur atom in active form. The sequence is that of Molybdenum cofactor sulfurase from Chaetomium globosum (strain ATCC 6205 / CBS 148.51 / DSM 1962 / NBRC 6347 / NRRL 1970) (Soil fungus).